A 366-amino-acid polypeptide reads, in one-letter code: Probable dual-specificity RNA methyltransferase RlmN (366 aa).

Glu107 serves as the catalytic Proton acceptor. In terms of domain architecture, Radical SAM core spans 113–342 (AEERMTACLS…MAQKFHVTVR (230 aa)). The cysteines at positions 120 and 353 are disulfide-linked. [4Fe-4S] cluster-binding residues include Cys127, Cys131, and Cys134. S-adenosyl-L-methionine is bound by residues 177–178 (GE), Ser210, 233–235 (SLH), and Asn310. The active-site S-methylcysteine intermediate is Cys353.

Belongs to the radical SAM superfamily. RlmN family. [4Fe-4S] cluster is required as a cofactor.

The protein localises to the cytoplasm. The catalysed reaction is adenosine(2503) in 23S rRNA + 2 reduced [2Fe-2S]-[ferredoxin] + 2 S-adenosyl-L-methionine = 2-methyladenosine(2503) in 23S rRNA + 5'-deoxyadenosine + L-methionine + 2 oxidized [2Fe-2S]-[ferredoxin] + S-adenosyl-L-homocysteine. It carries out the reaction adenosine(37) in tRNA + 2 reduced [2Fe-2S]-[ferredoxin] + 2 S-adenosyl-L-methionine = 2-methyladenosine(37) in tRNA + 5'-deoxyadenosine + L-methionine + 2 oxidized [2Fe-2S]-[ferredoxin] + S-adenosyl-L-homocysteine. In terms of biological role, specifically methylates position 2 of adenine 2503 in 23S rRNA and position 2 of adenine 37 in tRNAs. This chain is Probable dual-specificity RNA methyltransferase RlmN, found in Chlorobium chlorochromatii (strain CaD3).